Here is a 742-residue protein sequence, read N- to C-terminus: Photosystem I P700 chlorophyll a apoprotein A2 (742 aa).

8 consecutive transmembrane segments (helical) span residues 46 to 69 (LFST…FHIA), 135 to 158 (LFQG…LHLQ), 175 to 199 (LNHH…HVAI), 273 to 291 (IAHH…GHMY), 336 to 359 (LHFQ…QHMG), 375 to 401 (SALY…IFFV), 423 to 445 (ALIS…IYVH), and 525 to 543 (FLVH…LILI). Residues C567 and C576 each coordinate [4Fe-4S] cluster. Transmembrane regions (helical) follow at residues 583-604 (ATYL…YWHW) and 651-673 (LSPW…MFLI). Residues H662, M670, and Y678 each coordinate divinyl chlorophyll a. Phylloquinone is bound at residue W679. Residues 715–735 (LVGLTHFTVGNFVTFGAFVIA) form a helical membrane-spanning segment.

It belongs to the PsaA/PsaB family. In terms of assembly, the PsaA/B heterodimer binds the P700 divinyl chlorophyll special pair and subsequent electron acceptors. PSI consists of a core antenna complex that captures photons, and an electron transfer chain that converts photonic excitation into a charge separation. The cyanobacterial PSI reaction center is composed of one copy each of PsaA,B,C,D,E,F,I,J,K,L,M and X, and forms trimeric complexes. PSI electron transfer chain: 5 divinyl chlorophyll a, 1 divinyl chlorophyll a', 2 phylloquinones and 3 4Fe-4S clusters. PSI core antenna: 90 divinyl chlorophyll a, 22 carotenoids, 3 phospholipids and 1 galactolipid. P700 is a divinyl chlorophyll a/divinyl chlorophyll a' dimer, A0 is one or more divinyl chlorophyll a, A1 is one or both phylloquinones and FX is a shared 4Fe-4S iron-sulfur center. serves as cofactor.

The protein localises to the cellular thylakoid membrane. The catalysed reaction is reduced [plastocyanin] + hnu + oxidized [2Fe-2S]-[ferredoxin] = oxidized [plastocyanin] + reduced [2Fe-2S]-[ferredoxin]. In terms of biological role, psaA and PsaB bind P700, the primary electron donor of photosystem I (PSI), as well as the electron acceptors A0, A1 and FX. PSI is a plastocyanin/cytochrome c6-ferredoxin oxidoreductase, converting photonic excitation into a charge separation, which transfers an electron from the donor P700 chlorophyll pair to the spectroscopically characterized acceptors A0, A1, FX, FA and FB in turn. Oxidized P700 is reduced on the lumenal side of the thylakoid membrane by plastocyanin or cytochrome c6. In Prochlorococcus marinus (strain NATL2A), this protein is Photosystem I P700 chlorophyll a apoprotein A2.